The following is a 317-amino-acid chain: Metaxin-1 (317 aa).

Glycyl lysine isopeptide (Lys-Gly) (interchain with G-Cter in ubiquitin) cross-links involve residues K38, K41, and K78. Residues 164–184 (EELEKELYQEARECLTLLSQR) traverse the membrane as a helical segment.

Belongs to the metaxin family. In terms of assembly, interacts with MTX2/metaxin-2. Associates with the mitochondrial contact site and cristae organizing system (MICOS) complex, composed of at least MICOS10/MIC10, CHCHD3/MIC19, CHCHD6/MIC25, APOOL/MIC27, IMMT/MIC60, APOO/MIC23/MIC26 and QIL1/MIC13. This complex was also known under the names MINOS or MitOS complex. The MICOS complex associates with mitochondrial outer membrane proteins SAMM50, MTX1 and MTX2 (together described as components of the mitochondrial outer membrane sorting assembly machinery (SAM) complex) and DNAJC11, mitochondrial inner membrane protein TMEM11 and with HSPA9. The MICOS and SAM complexes together with DNAJC11 are part of a large protein complex spanning both membranes termed the mitochondrial intermembrane space bridging (MIB) complex. Interacts with ARMC1. Ubiquitinated by PRKN during mitophagy, leading to its degradation and enhancement of mitophagy. Deubiquitinated by USP30.

It is found in the mitochondrion outer membrane. In terms of biological role, involved in transport of proteins into the mitochondrion. Essential for embryonic development. This chain is Metaxin-1 (MTX1), found in Sus scrofa (Pig).